A 426-amino-acid polypeptide reads, in one-letter code: Enolase (426 aa).

Gln162 provides a ligand contact to (2R)-2-phosphoglycerate. Glu204 acts as the Proton donor in catalysis. Residues Asp241, Glu286, and Asp313 each contribute to the Mg(2+) site. Residues Lys338, Arg367, Ser368, and Lys389 each contribute to the (2R)-2-phosphoglycerate site. The active-site Proton acceptor is the Lys338.

The protein belongs to the enolase family. Mg(2+) is required as a cofactor.

The protein localises to the cytoplasm. It is found in the secreted. It localises to the cell surface. The catalysed reaction is (2R)-2-phosphoglycerate = phosphoenolpyruvate + H2O. Its pathway is carbohydrate degradation; glycolysis; pyruvate from D-glyceraldehyde 3-phosphate: step 4/5. In terms of biological role, catalyzes the reversible conversion of 2-phosphoglycerate (2-PG) into phosphoenolpyruvate (PEP). It is essential for the degradation of carbohydrates via glycolysis. The protein is Enolase of Aliarcobacter butzleri (strain RM4018) (Arcobacter butzleri).